The primary structure comprises 138 residues: Large ribosomal subunit protein uL16c (138 aa).

A disordered region spans residues 1 to 21; that stretch reads MLSPQKTKFRKQHRGRMKGVS. The segment covering 7–21 has biased composition (basic residues); that stretch reads TKFRKQHRGRMKGVS.

Belongs to the universal ribosomal protein uL16 family. As to quaternary structure, part of the 50S ribosomal subunit.

The protein resides in the plastid. Its subcellular location is the chloroplast. The sequence is that of Large ribosomal subunit protein uL16c from Cycas taitungensis (Prince sago).